Consider the following 96-residue polypeptide: UPF0102 protein ML1607 (96 aa).

It belongs to the UPF0102 family.

The polypeptide is UPF0102 protein ML1607 (Mycobacterium leprae (strain TN)).